Consider the following 97-residue polypeptide: uncharacterized protein (97 aa).

A run of 3 helical transmembrane segments spans residues 5-25 (TLVA…SLSV), 27-47 (MVFV…LICY), and 77-97 (IISI…VFIL).

It localises to the membrane. This is an uncharacterized protein from Saccharomyces cerevisiae (strain ATCC 204508 / S288c) (Baker's yeast).